Consider the following 139-residue polypeptide: MPTINQLIRKGRVSKVENSKSPALNKGYNSFKKEHTNVTSPQKRGVCTRVGTMTPKKPNSALRKYARVRLSNLIEVTAYIPGIGHNLQEHSVVLIRGGRVKDLPGVRYHIVRGALDTAGVDGRMQGRSKYGTKRPKQSK.

At Asp-102 the chain carries 3-methylthioaspartic acid.

It belongs to the universal ribosomal protein uS12 family. In terms of assembly, part of the 30S ribosomal subunit. Contacts proteins S8 and S17. May interact with IF1 in the 30S initiation complex.

With S4 and S5 plays an important role in translational accuracy. In terms of biological role, interacts with and stabilizes bases of the 16S rRNA that are involved in tRNA selection in the A site and with the mRNA backbone. Located at the interface of the 30S and 50S subunits, it traverses the body of the 30S subunit contacting proteins on the other side and probably holding the rRNA structure together. The combined cluster of proteins S8, S12 and S17 appears to hold together the shoulder and platform of the 30S subunit. The chain is Small ribosomal subunit protein uS12 from Bacillus pumilus (strain SAFR-032).